The following is a 788-amino-acid chain: Endonuclease MutS2 (788 aa).

ATP is bound at residue 332-339; sequence GPNTGGKT. In terms of domain architecture, Smr spans 713 to 788; the sequence is VDLRGMDAEE…GTGVTVVELK (76 aa).

Belongs to the DNA mismatch repair MutS family. MutS2 subfamily. In terms of assembly, homodimer. Binds to stalled ribosomes, contacting rRNA.

Endonuclease that is involved in the suppression of homologous recombination and thus may have a key role in the control of bacterial genetic diversity. Its function is as follows. Acts as a ribosome collision sensor, splitting the ribosome into its 2 subunits. Detects stalled/collided 70S ribosomes which it binds and splits by an ATP-hydrolysis driven conformational change. Acts upstream of the ribosome quality control system (RQC), a ribosome-associated complex that mediates the extraction of incompletely synthesized nascent chains from stalled ribosomes and their subsequent degradation. Probably generates substrates for RQC. This Clostridium botulinum (strain Kyoto / Type A2) protein is Endonuclease MutS2.